A 123-amino-acid chain; its full sequence is Large ribosomal subunit protein uL14c (123 aa).

It belongs to the universal ribosomal protein uL14 family. Part of the 50S ribosomal subunit.

It localises to the plastid. The protein localises to the chloroplast. Its function is as follows. Binds to 23S rRNA. The chain is Large ribosomal subunit protein uL14c from Saccharum hybrid (Sugarcane).